We begin with the raw amino-acid sequence, 241 residues long: Uridylate kinase (241 aa).

15–18 contributes to the ATP binding site; it reads KLSG. Residues 23 to 28 are involved in allosteric activation by GTP; it reads GAEGFG. Gly57 contributes to the UMP binding site. ATP is bound by residues Gly58 and Arg62. Residues Asp77 and 138-145 each bind UMP; that span reads TGNPFFTT. Residues Thr165, Tyr171, and Asp174 each contribute to the ATP site.

Belongs to the UMP kinase family. As to quaternary structure, homohexamer.

The protein resides in the cytoplasm. The enzyme catalyses UMP + ATP = UDP + ADP. Its pathway is pyrimidine metabolism; CTP biosynthesis via de novo pathway; UDP from UMP (UMPK route): step 1/1. Its activity is regulated as follows. Allosterically activated by GTP. Inhibited by UTP. Catalyzes the reversible phosphorylation of UMP to UDP. This chain is Uridylate kinase, found in Yersinia pseudotuberculosis serotype O:1b (strain IP 31758).